A 287-amino-acid polypeptide reads, in one-letter code: MKSRLFIISQYLLPHHLLSRLAGCVAECRARWFKNAFTAWFAKRYQVNMNEALVEDLTAYEHFNAFFTRALKPDARPLDETPGAILCPADGAVSQLGPIEHGRIFQAKGHSFSALELLGGDPALAAPFMGGEFATIYLSPKDYHRVHMPLAGTLREMVYVPGRLFSVNQTTAENVPELFARNERVVCLFDTERGPMAVVLVGAMIVASIETVWAGLVTPPKRELKTFRYDEGSRAPIHLEKGAELGRFKLGSTAIVLFGPEQVKWAETLGAGSATRMGELLAVPVQA.

Catalysis depends on charge relay system; for autoendoproteolytic cleavage activity residues D90, H147, and S252. S252 serves as the catalytic Schiff-base intermediate with substrate; via pyruvic acid; for decarboxylase activity. S252 carries the post-translational modification Pyruvic acid (Ser); by autocatalysis.

Belongs to the phosphatidylserine decarboxylase family. PSD-B subfamily. Prokaryotic type I sub-subfamily. In terms of assembly, heterodimer of a large membrane-associated beta subunit and a small pyruvoyl-containing alpha subunit. The cofactor is pyruvate. Is synthesized initially as an inactive proenzyme. Formation of the active enzyme involves a self-maturation process in which the active site pyruvoyl group is generated from an internal serine residue via an autocatalytic post-translational modification. Two non-identical subunits are generated from the proenzyme in this reaction, and the pyruvate is formed at the N-terminus of the alpha chain, which is derived from the carboxyl end of the proenzyme. The autoendoproteolytic cleavage occurs by a canonical serine protease mechanism, in which the side chain hydroxyl group of the serine supplies its oxygen atom to form the C-terminus of the beta chain, while the remainder of the serine residue undergoes an oxidative deamination to produce ammonia and the pyruvoyl prosthetic group on the alpha chain. During this reaction, the Ser that is part of the protease active site of the proenzyme becomes the pyruvoyl prosthetic group, which constitutes an essential element of the active site of the mature decarboxylase.

The protein resides in the cell membrane. The catalysed reaction is a 1,2-diacyl-sn-glycero-3-phospho-L-serine + H(+) = a 1,2-diacyl-sn-glycero-3-phosphoethanolamine + CO2. It participates in phospholipid metabolism; phosphatidylethanolamine biosynthesis; phosphatidylethanolamine from CDP-diacylglycerol: step 2/2. Catalyzes the formation of phosphatidylethanolamine (PtdEtn) from phosphatidylserine (PtdSer). The protein is Phosphatidylserine decarboxylase proenzyme of Pseudomonas putida (strain W619).